We begin with the raw amino-acid sequence, 402 residues long: Protein rds1 (402 aa).

Functionally, may have a function in stress-related responses of the cell. The sequence is that of Protein rds1 (rds1) from Schizosaccharomyces pombe (strain 972 / ATCC 24843) (Fission yeast).